Consider the following 444-residue polypeptide: Probable glycine dehydrogenase (decarboxylating) subunit 1 (444 aa).

It belongs to the GcvP family. N-terminal subunit subfamily. The glycine cleavage system is composed of four proteins: P, T, L and H. In this organism, the P 'protein' is a heterodimer of two subunits.

The enzyme catalyses N(6)-[(R)-lipoyl]-L-lysyl-[glycine-cleavage complex H protein] + glycine + H(+) = N(6)-[(R)-S(8)-aminomethyldihydrolipoyl]-L-lysyl-[glycine-cleavage complex H protein] + CO2. The glycine cleavage system catalyzes the degradation of glycine. The P protein binds the alpha-amino group of glycine through its pyridoxal phosphate cofactor; CO(2) is released and the remaining methylamine moiety is then transferred to the lipoamide cofactor of the H protein. In Moorella thermoacetica (strain ATCC 39073 / JCM 9320), this protein is Probable glycine dehydrogenase (decarboxylating) subunit 1.